A 261-amino-acid chain; its full sequence is NAD(P)H-quinone oxidoreductase subunit K, chloroplastic (261 aa).

[4Fe-4S] cluster-binding residues include Cys43, Cys44, Cys108, and Cys139.

The protein belongs to the complex I 20 kDa subunit family. In terms of assembly, NDH is composed of at least 16 different subunits, 5 of which are encoded in the nucleus. [4Fe-4S] cluster serves as cofactor.

Its subcellular location is the plastid. It localises to the chloroplast thylakoid membrane. The catalysed reaction is a plastoquinone + NADH + (n+1) H(+)(in) = a plastoquinol + NAD(+) + n H(+)(out). It catalyses the reaction a plastoquinone + NADPH + (n+1) H(+)(in) = a plastoquinol + NADP(+) + n H(+)(out). Functionally, NDH shuttles electrons from NAD(P)H:plastoquinone, via FMN and iron-sulfur (Fe-S) centers, to quinones in the photosynthetic chain and possibly in a chloroplast respiratory chain. The immediate electron acceptor for the enzyme in this species is believed to be plastoquinone. Couples the redox reaction to proton translocation, and thus conserves the redox energy in a proton gradient. The protein is NAD(P)H-quinone oxidoreductase subunit K, chloroplastic of Cycas taitungensis (Prince sago).